The chain runs to 314 residues: tRNA dimethylallyltransferase (314 aa).

8-15 (GPTGAGKS) provides a ligand contact to ATP. Position 10-15 (10-15 (TGAGKS)) interacts with substrate.

Belongs to the IPP transferase family. As to quaternary structure, monomer. Requires Mg(2+) as cofactor.

It carries out the reaction adenosine(37) in tRNA + dimethylallyl diphosphate = N(6)-dimethylallyladenosine(37) in tRNA + diphosphate. Catalyzes the transfer of a dimethylallyl group onto the adenine at position 37 in tRNAs that read codons beginning with uridine, leading to the formation of N6-(dimethylallyl)adenosine (i(6)A). The polypeptide is tRNA dimethylallyltransferase (Mycobacterium tuberculosis (strain ATCC 25177 / H37Ra)).